The primary structure comprises 282 residues: Pantothenate synthetase (282 aa).

ATP is bound at residue 30 to 37 (MGYLHEGH). The active-site Proton donor is H37. Q61 is a (R)-pantoate binding site. Q61 contributes to the beta-alanine binding site. ATP is bound at residue 147 to 150 (GEKD). (R)-pantoate is bound at residue Q153. ATP-binding positions include I176 and 184–187 (KSSR).

This sequence belongs to the pantothenate synthetase family. As to quaternary structure, homodimer.

Its subcellular location is the cytoplasm. It catalyses the reaction (R)-pantoate + beta-alanine + ATP = (R)-pantothenate + AMP + diphosphate + H(+). The protein operates within cofactor biosynthesis; (R)-pantothenate biosynthesis; (R)-pantothenate from (R)-pantoate and beta-alanine: step 1/1. Functionally, catalyzes the condensation of pantoate with beta-alanine in an ATP-dependent reaction via a pantoyl-adenylate intermediate. The protein is Pantothenate synthetase of Enterococcus faecalis (strain ATCC 700802 / V583).